We begin with the raw amino-acid sequence, 384 residues long: Guanine nucleotide-binding protein alpha-2 subunit (384 aa).

The tract at residues 1–23 (MGLVCSRNRRYRDSDPEENAQAA) is disordered. Residue Gly-2 is the site of N-myristoyl glycine attachment. Residue Cys-5 is the site of S-palmitoyl cysteine attachment. In terms of domain architecture, G-alpha spans 38 to 384 (HIQKLLLLGA…RRNLFEAGLL (347 aa)). A G1 motif region spans residues 41-54 (KLLLLGAGESGKST). GTP contacts are provided by Glu-49, Ser-50, Gly-51, Lys-52, Ser-53, Thr-54, Asp-163, Leu-188, Tyr-189, Thr-194, Gly-222, Asn-288, Lys-289, Asp-291, and Ala-356. Ser-53 contributes to the Mg(2+) binding site. The segment at 186–194 (DVLYARVRT) is G2 motif. Position 194 (Thr-194) interacts with Mg(2+). Positions 215 to 224 (YRLFDVGGQR) are G3 motif. The tract at residues 284 to 291 (MLFLNKFD) is G4 motif. Residues 354–359 (TTALDQ) are G5 motif.

This sequence belongs to the G-alpha family. As to quaternary structure, g proteins are composed of 3 units; alpha, beta and gamma. The alpha chain contains the guanine nucleotide binding site. Mg(2+) is required as a cofactor.

Its function is as follows. Guanine nucleotide-binding proteins (G proteins) are involved as modulators or transducers in various transmembrane signaling systems. The protein is Guanine nucleotide-binding protein alpha-2 subunit (GPA2) of Pisum sativum (Garden pea).